Consider the following 312-residue polypeptide: GTP cyclohydrolase MptA (312 aa).

Belongs to the GTP cyclohydrolase IV family. In terms of assembly, homodimer. It depends on Fe(2+) as a cofactor.

The enzyme catalyses GTP + H2O = 7,8-dihydroneopterin 2',3'-cyclic phosphate + formate + diphosphate + H(+). The protein operates within cofactor biosynthesis; 5,6,7,8-tetrahydromethanopterin biosynthesis. Functionally, converts GTP to 7,8-dihydro-D-neopterin 2',3'-cyclic phosphate, the first intermediate in the biosynthesis of coenzyme methanopterin. This Methanococcus vannielii (strain ATCC 35089 / DSM 1224 / JCM 13029 / OCM 148 / SB) protein is GTP cyclohydrolase MptA.